The sequence spans 101 residues: Urease subunit beta (101 aa).

It belongs to the urease beta subunit family. Heterotrimer of UreA (gamma), UreB (beta) and UreC (alpha) subunits. Three heterotrimers associate to form the active enzyme.

The protein localises to the cytoplasm. It catalyses the reaction urea + 2 H2O + H(+) = hydrogencarbonate + 2 NH4(+). The protein operates within nitrogen metabolism; urea degradation; CO(2) and NH(3) from urea (urease route): step 1/1. This Cupriavidus metallidurans (strain ATCC 43123 / DSM 2839 / NBRC 102507 / CH34) (Ralstonia metallidurans) protein is Urease subunit beta.